A 169-amino-acid chain; its full sequence is Sec-independent protein translocase protein TatB (169 aa).

Residues 1 to 21 form a helical membrane-spanning segment; the sequence is MFDIGFLELAVIAVIGLIVIG. Residues 98 to 169 form a disordered region; sequence EAEEAKLQTP…TTKTEPANDR (72 aa). Over residues 134–143 the composition is skewed to basic and acidic residues; it reads PPEEPSKVEA. The span at 146 to 169 shows a compositional bias: polar residues; sequence SAETPQANNQDQQPTTKTEPANDR.

The protein belongs to the TatB family. As to quaternary structure, the Tat system comprises two distinct complexes: a TatABC complex, containing multiple copies of TatA, TatB and TatC subunits, and a separate TatA complex, containing only TatA subunits. Substrates initially bind to the TatABC complex, which probably triggers association of the separate TatA complex to form the active translocon.

The protein localises to the cell inner membrane. Functionally, part of the twin-arginine translocation (Tat) system that transports large folded proteins containing a characteristic twin-arginine motif in their signal peptide across membranes. Together with TatC, TatB is part of a receptor directly interacting with Tat signal peptides. TatB may form an oligomeric binding site that transiently accommodates folded Tat precursor proteins before their translocation. This is Sec-independent protein translocase protein TatB from Saccharophagus degradans (strain 2-40 / ATCC 43961 / DSM 17024).